The sequence spans 245 residues: Flagellar basal-body rod protein FlgF (245 aa).

This sequence belongs to the flagella basal body rod proteins family. The basal body constitutes a major portion of the flagellar organelle and consists of five rings (E,L,P,S, and M) mounted on a central rod. The rod consists of about 26 subunits of FlgG in the distal portion, and FlgB, FlgC and FlgF are thought to build up the proximal portion of the rod with about 6 subunits each.

Its subcellular location is the bacterial flagellum basal body. The sequence is that of Flagellar basal-body rod protein FlgF (flgF) from Caulobacter vibrioides (strain ATCC 19089 / CIP 103742 / CB 15) (Caulobacter crescentus).